The following is a 241-amino-acid chain: Translation initiation factor IF-3 (241 aa).

The disordered stretch occupies residues 178 to 241 (KKTEAMAEAR…EAPAEASTEA (64 aa)). Basic and acidic residues predominate over residues 180–197 (TEAMAEAREAQAARKAEA). The span at 208–229 (ADEDIPEGELPEGEVPEAETTE) shows a compositional bias: acidic residues. The segment covering 230–241 (AAEAPAEASTEA) has biased composition (low complexity).

The protein belongs to the IF-3 family. Monomer.

The protein resides in the cytoplasm. Its function is as follows. IF-3 binds to the 30S ribosomal subunit and shifts the equilibrium between 70S ribosomes and their 50S and 30S subunits in favor of the free subunits, thus enhancing the availability of 30S subunits on which protein synthesis initiation begins. This is Translation initiation factor IF-3 from Streptomyces avermitilis (strain ATCC 31267 / DSM 46492 / JCM 5070 / NBRC 14893 / NCIMB 12804 / NRRL 8165 / MA-4680).